Here is a 299-residue protein sequence, read N- to C-terminus: MALIHGSVPGTSAVRLVFSTSASPSRFCLNVPVVKQGWKNSCRRRVLRAMVQETVQGSPLVYAREMERLSAKESLLLALKDAGGFEALVTGKTTNMQRIDVNERITSLERLNPTPRPTTSPCFEGRWNFEWFGSGSPGLLAARVIFERFPSTLANLSRMEILIKDANAKATANIKLLNSIESKIILSSKLTVEGPLRLKEEYVEGMLETPTVIEEAVPEQLKSALGQAATTLQQLPALIKDTLASGLRIPLSGSFERFFMISYLDEEILIVRDTEGVPEVLTRIETPSSTVVETIEYDS.

The N-terminal 48 residues, 1–48 (MALIHGSVPGTSAVRLVFSTSASPSRFCLNVPVVKQGWKNSCRRRVLR), are a transit peptide targeting the chloroplast. Alanine 2 bears the N-acetylvaline mark.

Belongs to the PAP/fibrillin family.

It is found in the plastid. It localises to the chloroplast. Its subcellular location is the plastoglobule. This chain is Probable plastid-lipid-associated protein 13, chloroplastic (PAP13), found in Arabidopsis thaliana (Mouse-ear cress).